Here is a 34-residue protein sequence, read N- to C-terminus: Photosystem II reaction center protein M (34 aa).

Residues 7–27 (GFVASLLFILVPAIFLIVLYI) traverse the membrane as a helical segment.

This sequence belongs to the PsbM family. PSII is composed of 1 copy each of membrane proteins PsbA, PsbB, PsbC, PsbD, PsbE, PsbF, PsbH, PsbI, PsbJ, PsbK, PsbL, PsbM, PsbT, PsbX, PsbY, PsbZ, Psb30/Ycf12, peripheral proteins PsbO, CyanoQ (PsbQ), PsbU, PsbV and a large number of cofactors. It forms dimeric complexes.

It is found in the cellular thylakoid membrane. One of the components of the core complex of photosystem II (PSII). PSII is a light-driven water:plastoquinone oxidoreductase that uses light energy to abstract electrons from H(2)O, generating O(2) and a proton gradient subsequently used for ATP formation. It consists of a core antenna complex that captures photons, and an electron transfer chain that converts photonic excitation into a charge separation. This subunit is found at the monomer-monomer interface. The protein is Photosystem II reaction center protein M of Parasynechococcus marenigrum (strain WH8102).